Here is a 1500-residue protein sequence, read N- to C-terminus: Secreted chitinase LysM12 (1500 aa).

Positions 1–23 (MAPLWNGMAAGLLLSAAVVSGQA) are cleaved as a signal peptide. Residues Asn-53, Asn-225, Asn-251, and Asn-270 are each glycosylated (N-linked (GlcNAc...) asparagine). 2 LysM domains span residues 303-348 (RTQK…HVCC) and 367-415 (ATTT…VICI). In terms of domain architecture, Chitin-binding type-1 spans 428–496 (DAECGPQVPG…TNGCISHCGM (69 aa)). Cystine bridges form between Cys-431–Cys-459, Cys-453–Cys-465, Cys-458–Cys-472, and Cys-490–Cys-494. Positions 507–879 (FRSVGYYESY…PGMILQMKSG (373 aa)) constitute a GH18 domain. Residue Glu-625 is the Proton donor of the active site. Tyr-626 contributes to the chitin binding site. N-linked (GlcNAc...) asparagine glycans are attached at residues Asn-721 and Asn-800. Residue Trp-852 coordinates chitin. Asn-892 and Asn-983 each carry an N-linked (GlcNAc...) asparagine glycan. Positions 1164 to 1193 (IPKDIPYPDKTKRKDKDDDDNKKTEATDSE) are disordered. Residues 1169–1193 (PYPDKTKRKDKDDDDNKKTEATDSE) are compositionally biased toward basic and acidic residues.

Belongs to the glycosyl hydrolase 18 family. Chitinase class V subfamily.

It is found in the secreted. The enzyme catalyses Random endo-hydrolysis of N-acetyl-beta-D-glucosaminide (1-&gt;4)-beta-linkages in chitin and chitodextrins.. Its function is as follows. Secreted chitinase involved in the degradation of chitin, a component of the cell walls of fungi and exoskeletal elements of some animals (including worms and arthropods). Involved in pathogenesis via manipulation of host defenses for successful infection. The chain is Secreted chitinase LysM12 from Penicillium expansum (Blue mold rot fungus).